Reading from the N-terminus, the 641-residue chain is FACT complex subunit SSRP1-A (641 aa).

Residues 459 to 561 (TDDDAVDPHL…DPNAPKRAMT (103 aa)) form a disordered region. Residues 476–487 (GDEESDEEDEDF) show a composition bias toward acidic residues. Residues 512 to 524 (GGEKEKLSKKEAS) are compositionally biased toward basic and acidic residues. A DNA-binding region (HMG box) is located at residues 556–624 (PKRAMTPFMY…RYEKESAVYR (69 aa)).

It belongs to the SSRP1 family. Component of the FACT complex, a stable heterodimer of SPT16 and SSRP1.

It is found in the nucleus. The protein localises to the chromosome. Component of the FACT complex, a general chromatin factor that acts to reorganize nucleosomes. The FACT complex is involved in multiple processes that require DNA as a template such as mRNA elongation, DNA replication and DNA repair. During transcription elongation the FACT complex acts as a histone chaperone that both destabilizes and restores nucleosomal structure. It facilitates the passage of RNA polymerase II and transcription by promoting the dissociation of one histone H2A-H2B dimer from the nucleosome, then subsequently promotes the reestablishment of the nucleosome following the passage of RNA polymerase II. Binds specifically to double-stranded DNA. The polypeptide is FACT complex subunit SSRP1-A (SSRP1-A) (Oryza sativa subsp. japonica (Rice)).